The sequence spans 412 residues: Nuclear hormone receptor family member nhr-61 (412 aa).

Low complexity predominate over residues 1–19; sequence MIVDSISSSTASTSSSSPT. The tract at residues 1 to 23 is disordered; the sequence is MIVDSISSSTASTSSSSPTRGTP. Positions 27 to 102 form a DNA-binding region, nuclear receptor; it reads SLQCAVCGDV…VGMNPRAVQG (76 aa). 2 consecutive NR C4-type zinc fingers follow at residues 30–50 and 66–90; these read CAVC…CNGC and CRHG…LTRC. An NR LBD domain is found at 144-407; sequence KKEQIIDNLR…DWSQELRDHR (264 aa).

Belongs to the nuclear hormone receptor family.

Its subcellular location is the nucleus. Functionally, orphan nuclear receptor. The polypeptide is Nuclear hormone receptor family member nhr-61 (nhr-61) (Caenorhabditis elegans).